We begin with the raw amino-acid sequence, 1306 residues long: Activating transcription factor 7-interacting protein 1 (1306 aa).

Methionine 1 is subject to N-acetylmethionine. The tract at residues methionine 1–arginine 23 is disordered. Lysine 33 participates in a covalent cross-link: Glycyl lysine isopeptide (Lys-Gly) (interchain with G-Cter in SUMO2). Residues serine 57 and serine 112 each carry the phosphoserine modification. 7 disordered regions span residues glutamate 104–threonine 470, leucine 496–arginine 604, alanine 689–threonine 722, valine 765–proline 785, proline 871–threonine 895, arginine 920–glutamine 1060, and alanine 1152–leucine 1196. Polar residues-rich tracts occupy residues glutamate 109–serine 134 and valine 143–proline 162. Residue threonine 124 is modified to Phosphothreonine. 3 stretches are compositionally biased toward low complexity: residues glutamate 185–proline 212, glutamate 246–glutamate 261, and proline 284–serine 303. The segment covering glutamine 432–proline 441 has biased composition (basic and acidic residues). Phosphoserine is present on residues serine 511, serine 514, serine 516, and serine 533. Residues glycine 513–asparagine 523 show a composition bias toward polar residues. Basic and acidic residues-rich tracts occupy residues glutamate 557 to lysine 566, lysine 592 to serine 601, and alanine 689 to glutamate 699. A Nuclear localization signal motif is present at residues arginine 587–arginine 605. Lysine 592 is covalently cross-linked (Glycyl lysine isopeptide (Lys-Gly) (interchain with G-Cter in SUMO2)). Position 593 is a phosphoserine (serine 593). The interval methionine 596–isoleucine 851 is interaction with SETDB1. Positions asparagine 666–lysine 696 form a coiled coil. Phosphoserine occurs at positions 700 and 707. A compositionally biased stretch (polar residues) spans asparagine 713–threonine 722. Residues proline 871–proline 884 show a composition bias toward pro residues. A Phosphoserine modification is found at serine 933. Residues lysine 944 and lysine 974 each participate in a glycyl lysine isopeptide (Lys-Gly) (interchain with G-Cter in SUMO2) cross-link. Polar residues predominate over residues serine 948 to asparagine 981. Low complexity predominate over residues serine 987–serine 1000. Residues glycine 1001–glutamate 1011 form an interaction with SUMO region. A compositionally biased stretch (low complexity) spans serine 1022 to glutamine 1040. Residues proline 1054 to valine 1143 enclose the Fibronectin type-III 1 domain. The span at proline 1170 to leucine 1187 shows a compositional bias: pro residues. Residues glutamate 1190 to serine 1306 are interaction with MBD1. One can recognise a Fibronectin type-III 2 domain in the interval leucine 1196–serine 1302.

The protein belongs to the MCAF family. Interacts with MBD1; the interaction is enhanced when MBD1 is sumoylated. Interacts with SETDB1; the interaction protects SETDB1 from proteasomal degradation and is required to stimulate histone methyltransferase activity and facilitate the conversion of dimethylated to trimethylated H3 'Lys-9'. Interacts with SUMO ubiquitin-like proteins (SUMO1, SUNO2 and SUMO3), with a preference for SUMO2 and SUMO3. Interacts with SP1, ATF7 and ZHX1. Interacts with the general transcription machinery, including ERCC2, ERCC3, GTF2E1, GTF2E2 and POLR2A. Ubiquitously expressed at all stages studied.

Its subcellular location is the nucleus. Recruiter that couples transcriptional factors to general transcription apparatus and thereby modulates transcription regulation and chromatin formation. Can both act as an activator or a repressor depending on the context. Required for HUSH-mediated heterochromatin formation and gene silencing. Mediates MBD1-dependent transcriptional repression, probably by recruiting complexes containing SETDB1. Stabilizes SETDB1, is required to stimulate histone methyltransferase activity of SETDB1 and facilitates the conversion of dimethylated to trimethylated H3 'Lys-9' (H3K9me3). The complex formed with MBD1 and SETDB1 represses transcription and couples DNA methylation and histone H3 'Lys-9' trimethylation (H3K9me3). Facilitates telomerase TERT and TERC gene expression by SP1 in cancer cells. The protein is Activating transcription factor 7-interacting protein 1 (Atf7ip) of Mus musculus (Mouse).